A 570-amino-acid chain; its full sequence is Sulfite reductase [NADPH] hemoprotein beta-component (570 aa).

Residues Cys434, Cys440, Cys479, and Cys483 each coordinate [4Fe-4S] cluster. Position 483 (Cys483) interacts with siroheme.

It belongs to the nitrite and sulfite reductase 4Fe-4S domain family. Alpha(8)-beta(8). The alpha component is a flavoprotein, the beta component is a hemoprotein. Siroheme serves as cofactor. The cofactor is [4Fe-4S] cluster.

The catalysed reaction is hydrogen sulfide + 3 NADP(+) + 3 H2O = sulfite + 3 NADPH + 4 H(+). The protein operates within sulfur metabolism; hydrogen sulfide biosynthesis; hydrogen sulfide from sulfite (NADPH route): step 1/1. Component of the sulfite reductase complex that catalyzes the 6-electron reduction of sulfite to sulfide. This is one of several activities required for the biosynthesis of L-cysteine from sulfate. The protein is Sulfite reductase [NADPH] hemoprotein beta-component of Salmonella schwarzengrund (strain CVM19633).